A 201-amino-acid chain; its full sequence is Proteasome subunit beta type-2 (201 aa).

The residue at position 1 (Met-1) is an N-acetylmethionine.

This sequence belongs to the peptidase T1B family. In terms of assembly, the 26S proteasome consists of a 20S proteasome core and two 19S regulatory subunits. The 20S proteasome core is a barrel-shaped complex made of 28 subunits that are arranged in four stacked rings. The two outer rings are each formed by seven alpha subunits, and the two inner rings are formed by seven beta subunits. The proteolytic activity is exerted by three beta-subunits PSMB5, PSMB6 and PSMB7.

Its subcellular location is the cytoplasm. It is found in the nucleus. In terms of biological role, non-catalytic component of the 20S core proteasome complex involved in the proteolytic degradation of most intracellular proteins. This complex plays numerous essential roles within the cell by associating with different regulatory particles. Associated with two 19S regulatory particles, forms the 26S proteasome and thus participates in the ATP-dependent degradation of ubiquitinated proteins. The 26S proteasome plays a key role in the maintenance of protein homeostasis by removing misfolded or damaged proteins that could impair cellular functions, and by removing proteins whose functions are no longer required. Associated with the PA200 or PA28, the 20S proteasome mediates ubiquitin-independent protein degradation. This type of proteolysis is required in several pathways including spermatogenesis (20S-PA200 complex) or generation of a subset of MHC class I-presented antigenic peptides (20S-PA28 complex). This Bos taurus (Bovine) protein is Proteasome subunit beta type-2 (PSMB2).